A 715-amino-acid chain; its full sequence is Polyribonucleotide nucleotidyltransferase (715 aa).

Positions 485 and 491 each coordinate Mg(2+). A KH domain is found at 552–611; it reads PRIHTMKIDPKKIKDVIGKGGAVIRALTEETGTSIDIDDDGTVKIAATDNNAAKAVMARI. In terms of domain architecture, S1 motif spans 621–689; it reads NAIYKGKVTR…RQNRIRLTMK (69 aa). The interval 695 to 715 is disordered; the sequence is TPVAENVTEEAEVSSEQQAEI.

This sequence belongs to the polyribonucleotide nucleotidyltransferase family. As to quaternary structure, component of the RNA degradosome, which is a multiprotein complex involved in RNA processing and mRNA degradation. Mg(2+) is required as a cofactor.

The protein localises to the cytoplasm. The enzyme catalyses RNA(n+1) + phosphate = RNA(n) + a ribonucleoside 5'-diphosphate. In terms of biological role, involved in mRNA degradation. Catalyzes the phosphorolysis of single-stranded polyribonucleotides processively in the 3'- to 5'-direction. This chain is Polyribonucleotide nucleotidyltransferase, found in Actinobacillus pleuropneumoniae serotype 3 (strain JL03).